The following is a 74-amino-acid chain: ATP synthase subunit c (74 aa).

Helical transmembrane passes span 8-28 (FIGI…VSNI) and 52-72 (IGAG…MLLI).

It belongs to the ATPase C chain family. As to quaternary structure, F-type ATPases have 2 components, F(1) - the catalytic core - and F(0) - the membrane proton channel. F(1) has five subunits: alpha(3), beta(3), gamma(1), delta(1), epsilon(1). F(0) has three main subunits: a(1), b(2) and c(10-14). The alpha and beta chains form an alternating ring which encloses part of the gamma chain. F(1) is attached to F(0) by a central stalk formed by the gamma and epsilon chains, while a peripheral stalk is formed by the delta and b chains.

It localises to the cell inner membrane. In terms of biological role, f(1)F(0) ATP synthase produces ATP from ADP in the presence of a proton or sodium gradient. F-type ATPases consist of two structural domains, F(1) containing the extramembraneous catalytic core and F(0) containing the membrane proton channel, linked together by a central stalk and a peripheral stalk. During catalysis, ATP synthesis in the catalytic domain of F(1) is coupled via a rotary mechanism of the central stalk subunits to proton translocation. Its function is as follows. Key component of the F(0) channel; it plays a direct role in translocation across the membrane. A homomeric c-ring of between 10-14 subunits forms the central stalk rotor element with the F(1) delta and epsilon subunits. This is ATP synthase subunit c from Rickettsia typhi (strain ATCC VR-144 / Wilmington).